A 221-amino-acid polypeptide reads, in one-letter code: Protein GrpE (221 aa).

A disordered region spans residues 1 to 83; it reads MEQEQKATQE…AKNCRTRSED (83 aa). A compositionally biased stretch (basic and acidic residues) spans 23-32; it reads QEEKAEERGG. The segment covering 41-53 has biased composition (low complexity); it reads ENLQQENTQAQQE.

This sequence belongs to the GrpE family. As to quaternary structure, homodimer.

Its subcellular location is the cytoplasm. Participates actively in the response to hyperosmotic and heat shock by preventing the aggregation of stress-denatured proteins, in association with DnaK and GrpE. It is the nucleotide exchange factor for DnaK and may function as a thermosensor. Unfolded proteins bind initially to DnaJ; upon interaction with the DnaJ-bound protein, DnaK hydrolyzes its bound ATP, resulting in the formation of a stable complex. GrpE releases ADP from DnaK; ATP binding to DnaK triggers the release of the substrate protein, thus completing the reaction cycle. Several rounds of ATP-dependent interactions between DnaJ, DnaK and GrpE are required for fully efficient folding. The sequence is that of Protein GrpE from Geobacillus stearothermophilus (Bacillus stearothermophilus).